A 235-amino-acid polypeptide reads, in one-letter code: Class A basic helix-loop-helix protein 9 (235 aa).

Disordered regions lie at residues 1–69 (MLRG…RRMA) and 132–235 (GHLE…HPRS). The segment covering 55–67 (RRRARPVRSKARR) has biased composition (basic residues). A bHLH domain is found at 65-117 (ARRMAANVRERKRILDYNEAFNALRRALRHDLGGKRLSKIATLRRAIHRIAAL).

In terms of assembly, heterodimer. Efficient DNA binding requires dimerization with another bHLH protein. Interacts with TCF3, TCF4, and TCF12.

The protein localises to the nucleus. It localises to the cytoplasm. Functionally, transcription factor, which play a role in limb development. Is an essential player in the regulatory network governing transcription of genes implicated in limb morphogenesis. The sequence is that of Class A basic helix-loop-helix protein 9 (BHLHA9) from Homo sapiens (Human).